We begin with the raw amino-acid sequence, 221 residues long: Uracil-DNA glycosylase 1 (221 aa).

D61 (proton acceptor) is an active-site residue.

The protein belongs to the uracil-DNA glycosylase (UDG) superfamily. UNG family.

It localises to the cytoplasm. It carries out the reaction Hydrolyzes single-stranded DNA or mismatched double-stranded DNA and polynucleotides, releasing free uracil.. Excises uracil residues from the DNA which can arise as a result of misincorporation of dUMP residues by DNA polymerase or due to deamination of cytosine. The sequence is that of Uracil-DNA glycosylase 1 from Listeria monocytogenes serovar 1/2a (strain ATCC BAA-679 / EGD-e).